We begin with the raw amino-acid sequence, 118 residues long: Ribosomal silencing factor RsfS (118 aa).

The protein belongs to the Iojap/RsfS family. In terms of assembly, interacts with ribosomal protein uL14 (rplN).

Its subcellular location is the cytoplasm. Functions as a ribosomal silencing factor. Interacts with ribosomal protein uL14 (rplN), blocking formation of intersubunit bridge B8. Prevents association of the 30S and 50S ribosomal subunits and the formation of functional ribosomes, thus repressing translation. This Bacillus subtilis (strain 168) protein is Ribosomal silencing factor RsfS.